A 437-amino-acid polypeptide reads, in one-letter code: MEREIAFGLENFNTDINTMKRNVSEVISLLGLNKIRDKQTTEISGGEKQRVAIASVVSMDPQIIAFDEPISQLDPISAEEVLNSIKRLNRDLGKTIILVEQRLDKCFHMADRIIFMENGEIIGQGTPKNIPENIVNKYHLPTITYIFKEAGLQTLPITVKEGRDIIRNNKFQDLKEDDLKFKEVVMEIEKLNFEYERGYKILKDLSFKLHRGEIMTVMGENGAGKSTLFKIIAGMIDKYKGKVLIDNKNIKSLKLKERIKKIGYLSQNPNDYFGRKTVFEEVGYTLKNIGEYKEEKVEQVMKLLNISYLEDKNPRDLSGGEKQRVAIACTIITDPEILILDEPTRGMDAEAKENLGEIIKTLAEVGKSIVVITHDSDFAGDYSHSVMLMFNGEIVAKGCARDILYNSMYYSPQISKIFKNKCNIISSKRAIELLKVI.

2 consecutive ABC transporter domains span residues 1–143 (MERE…LPTI) and 179–416 (LKFK…QISK). 219-226 (GENGAGKS) lines the ATP pocket.

Belongs to the ABC transporter superfamily.

It is found in the cell membrane. Probably part of an ABC transporter complex. Responsible for energy coupling to the transport system. This Clostridium tetani (strain Massachusetts / E88) protein is Putative ABC transporter ATP-binding protein CTC_00753.